The following is a 1159-amino-acid chain: MIIFKNNEIRFNSILKSILLLLLLFINGNNCKTAQQFLDENFNHALFREHQLEKEYKTKQLVKDDPNMYSDWTEVPAATAEAVTIMRGDDYYYDYDKEQKIEMIVFGSENAISSGSAQNYWYGQTCEATNFNNTPTTTCPNDCHSYWGQGQCNETSSTCICNYFFIGDDCSENVDPQHNWDKMNCNGGRYCPPIYNYPTPRSCVCPPGQAGLECTVCLNNEGCQALTGNYSSSFECNSSPYTYFEKSYSCVVTSAEVNGDLNNSTASASIDCQFPGGNYNTQTGVCSMNLYYRIHGSPLYFNCSFTECDRTILPGQNQSIVCQNSVCNCTTYCGFILDGLISAVTGEATFECGAQTNPDGTSNCLFSQYTINQMLPAIPLQCMSGECIDVATGAPTPPPIYPVPVASMSFLYIYVGSGVGFIGLTLLIGAIFLIFSLQEDRKNFKEDTHLVCELSFHNISCYVNERSGFFGKDVKRKQILDNVNGVCPPGQLTALMGLSGSGKTSLLDILSGRKNVGNIDGKVLINGAPVGKNFKRISGYVTQDDIQIGTLTCREHLMFAALLKLPENMSLEIKQQRVASVLEELGLTRVADNPIGTSEKRGISGGERRRLSIATELIVDPSILFIDEPTSGLDSHSASELITKLKQLANNSTKGQRTIIFSIHQPSAELFEQFDNLILLHQGNPYFSGKREDSVNYFIKQKIAGMTEFEQQNYRMHLKNPADFIISMVTDKNCQRFNSTYVDSRVASPFYQSTSPALSSNSNNSDINLNHHRIINNPHNQNIHHQQHHHHHRHIYGINGPSIDNNDSDSDSDERDHLLASDNINNNNNNNKVKNNDNNNKNNDDDVEDIEEASPIIVVGNQGEPLASHIKIGKVEEYATSFWTQFFVVCRRSLLNYMRNPFLLRTTYFVHIFVGLTLGYLFWKLPANLEPGCQNRFGAMFFMTALLSFGSITSLDLFYNDRIIFIRERANGFYRTSAYFLAKVVTDIIPMRVIPPIILGSICYYMIGLRPGILHFIYFLISLVLTSTVASSMCMAISTISPTFGTANMVSILLLFVFLLFDGFLLARSSIPKYLIGLVWISFMSYGLEIPVVNEFNGLWIEYNPPNTRPTYADGLEFLSTIGANPNRLFTDMYVLLGMIVGYLLLAYVFLRFLVREYR.

The next 2 helical transmembrane spans lie at 11-31 (FNSILKSILLLLLLFINGNNC) and 415-435 (VGSGVGFIGLTLLIGAIFLIF). The region spanning 454–707 (LSFHNISCYV…FIKQKIAGMT (254 aa)) is the ABC transporter domain. Residue 497–504 (GLSGSGKT) coordinates ATP. The disordered stretch occupies residues 752-846 (QSTSPALSSN…DNNNKNNDDD (95 aa)). Composition is skewed to low complexity over residues 759 to 768 (SSNSNNSDIN) and 775 to 784 (INNPHNQNIH). A compositionally biased stretch (basic residues) spans 785 to 795 (HQQHHHHHRHI). Over residues 822–841 (DNINNNNNNNKVKNNDNNNK) the composition is skewed to low complexity. One can recognise an ABC transmembrane type-2 domain in the interval 902–1154 (FLLRTTYFVH…LLAYVFLRFL (253 aa)). Transmembrane regions (helical) follow at residues 909–929 (FVHIFVGLTLGYLFWKLPANL), 937–957 (FGAMFFMTALLSFGSITSLDL), 1005–1025 (YMIGLRPGILHFIYFLISLVL), 1047–1067 (ANMVSILLLFVFLLFDGFLLA), 1074–1094 (YLIGLVWISFMSYGLEIPVVN), and 1135–1155 (VLLGMIVGYLLLAYVFLRFLV).

This sequence belongs to the ABC transporter superfamily. ABCG family. Eye pigment precursor importer (TC 3.A.1.204) subfamily.

The protein localises to the membrane. The protein is ABC transporter G family member 24 (abcG24) of Dictyostelium discoideum (Social amoeba).